A 119-amino-acid chain; its full sequence is Autophagy-related protein 8c (119 aa).

The Phosphatidylethanolamine amidated glycine moiety is linked to residue Gly-117. The propeptide at 118 to 119 is removed in mature form; that stretch reads LV.

The protein belongs to the ATG8 family. Interacts with ATG4. Interacts with NBR1. Post-translationally, the C-terminal 2 residues are removed by ATG4 to expose Gly-117 at the C-terminus. This Gly-117 forms then a thioester bond with the 'Cys-558' of ATG7 (E1-like activating enzyme) before being transferred to the 'Cys-258' of ATG3 (the specific E2 conjugating enzyme), in order to be finally amidated with phosphatidylethanolamine. This lipid modification anchors ATG8 to autophagosomes. As to expression, constitutively expressed.

It is found in the cytoplasmic vesicle. The protein localises to the autophagosome membrane. Its subcellular location is the vacuole membrane. The protein resides in the cytoplasm. It localises to the cytoskeleton. In terms of biological role, ubiquitin-like modifier involved in autophagosomes formation. May mediate the delivery of the autophagosomes to the vacuole via the microtubule cytoskeleton. In Arabidopsis thaliana (Mouse-ear cress), this protein is Autophagy-related protein 8c (ATG8C).